Reading from the N-terminus, the 367-residue chain is tRNA-specific 2-thiouridylase MnmA (367 aa).

Residues 12–19 (GMSGGVDS) and M38 contribute to the ATP site. The tract at residues 98–100 (NPD) is interaction with target base in tRNA. The active-site Nucleophile is C103. C103 and C200 are joined by a disulfide. G128 is an ATP binding site. An interaction with tRNA region spans residues 150 to 152 (KDQ). The active-site Cysteine persulfide intermediate is C200. The interval 312–313 (RY) is interaction with tRNA.

It belongs to the MnmA/TRMU family. Interacts with TusE.

The protein localises to the cytoplasm. The catalysed reaction is S-sulfanyl-L-cysteinyl-[protein] + uridine(34) in tRNA + AH2 + ATP = 2-thiouridine(34) in tRNA + L-cysteinyl-[protein] + A + AMP + diphosphate + H(+). Catalyzes the 2-thiolation of uridine at the wobble position (U34) of tRNA(Lys), tRNA(Glu) and tRNA(Gln), leading to the formation of s(2)U34, the first step of tRNA-mnm(5)s(2)U34 synthesis. Sulfur is provided by IscS, via a sulfur-relay system. Binds ATP and its substrate tRNAs. The polypeptide is tRNA-specific 2-thiouridylase MnmA (Photorhabdus laumondii subsp. laumondii (strain DSM 15139 / CIP 105565 / TT01) (Photorhabdus luminescens subsp. laumondii)).